Consider the following 381-residue polypeptide: E3 ubiquitin-protein ligase RNF133 (381 aa).

Residues 65–167 form the PA domain; the sequence is SSILKRVAGV…VKGMEILHLI (103 aa). The helical transmembrane segment at 186–208 threads the bilayer; the sequence is WLNHYFVSFMIVTTATLAYFTFY. The segment at 256–297 adopts an RING-type; atypical zinc-finger fold; that stretch reads CVICFEAYKPNEIVRILTCKHFFHKNCIDPWILAHGTCPMCK. Residues 340 to 381 are disordered; it reads LPPARTSSKVTHVQEHPTSVNVGSQPPEAEETGHPSFGQHDL. The span at 344-363 shows a compositional bias: polar residues; sequence RTSSKVTHVQEHPTSVNVGS.

As to quaternary structure, interacts with E3 ligase UBE2J1. Auto-ubiquitinated.

Its subcellular location is the endoplasmic reticulum membrane. The enzyme catalyses S-ubiquitinyl-[E2 ubiquitin-conjugating enzyme]-L-cysteine + [acceptor protein]-L-lysine = [E2 ubiquitin-conjugating enzyme]-L-cysteine + N(6)-ubiquitinyl-[acceptor protein]-L-lysine.. The protein operates within protein modification; protein ubiquitination. Functionally, has E3 ubiquitin-protein ligase activity. Plays a role in male fecundity through the interaction with the E2 ubituitin-protein ligase UBE2J1. In Rattus norvegicus (Rat), this protein is E3 ubiquitin-protein ligase RNF133 (Rnf133).